The chain runs to 518 residues: Laccase (518 aa).

Residues 1 to 21 (MSRFQSLLSFVLVSLAAVANA) form the signal peptide. 2 consecutive Plastocyanin-like domains span residues 23–148 (IGPV…FVVY) and 160–302 (IDND…ILRY). N-linked (GlcNAc...) asparagine glycosylation is found at Asn72 and Asn75. His85, His87, His130, and His132 together coordinate Cu cation. Cystine bridges form between Cys106–Cys507 and Cys138–Cys226. Asn229 carries N-linked (GlcNAc...) asparagine glycosylation. Residues 308-330 (VEPTTTQTTSTKPLNEADLHPLT) are disordered. Asn354, Asn362, and Asn398 each carry an N-linked (GlcNAc...) asparagine glycan. Residues 369–489 (SVPVLLQILS…AGFAVVLAED (121 aa)) form the Plastocyanin-like 3 domain. The Cu cation site is built by His416, His419, His421, His471, Cys472, His473, and His477.

This sequence belongs to the multicopper oxidase family. It depends on Cu cation as a cofactor.

The protein resides in the secreted. The enzyme catalyses 4 hydroquinone + O2 = 4 benzosemiquinone + 2 H2O. Its function is as follows. Lignin degradation and detoxification of lignin-derived products. Cleaves the C-C and C-O bonds of some phenolic lignin model compounds (such as O- and P-quinols, aminophenols and phenylenediamine). May also be involved in synthesis of phenoxazinone pigments. The chain is Laccase (LCC3-1) from Pycnoporus cinnabarinus (Cinnabar-red polypore).